We begin with the raw amino-acid sequence, 590 residues long: Pentatricopeptide repeat-containing protein At2g46050, mitochondrial (590 aa).

The N-terminal 109 residues, M1–I109, are a transit peptide targeting the mitochondrion. PPR repeat units follow at residues D141–S175, S176–R206, D207–F241, D244–I266, D275–R305, N306–P340, D341–D375, F376–P406, D407–K437, D441–F471, and E477–E507. The segment at A512–Y588 is type E motif.

Belongs to the PPR family. PCMP-E subfamily.

It is found in the mitochondrion. This Arabidopsis thaliana (Mouse-ear cress) protein is Pentatricopeptide repeat-containing protein At2g46050, mitochondrial (PCMP-E39).